Consider the following 281-residue polypeptide: Putative rRNA methyltransferase YqxC (281 aa).

The 62-residue stretch at 6 to 67 (ERLDVLLVER…NPLRYVSRGG (62 aa)) folds into the S4 RNA-binding domain.

This sequence belongs to the TlyA family.

This is Putative rRNA methyltransferase YqxC (yqxC) from Bacillus subtilis (strain 168).